The following is a 434-amino-acid chain: Methylenetetrahydrofolate--tRNA-(uracil-5-)-methyltransferase TrmFO (434 aa).

10 to 15 (GAGLAG) contacts FAD.

It belongs to the MnmG family. TrmFO subfamily. The cofactor is FAD.

Its subcellular location is the cytoplasm. The catalysed reaction is uridine(54) in tRNA + (6R)-5,10-methylene-5,6,7,8-tetrahydrofolate + NADH + H(+) = 5-methyluridine(54) in tRNA + (6S)-5,6,7,8-tetrahydrofolate + NAD(+). It catalyses the reaction uridine(54) in tRNA + (6R)-5,10-methylene-5,6,7,8-tetrahydrofolate + NADPH + H(+) = 5-methyluridine(54) in tRNA + (6S)-5,6,7,8-tetrahydrofolate + NADP(+). Catalyzes the folate-dependent formation of 5-methyl-uridine at position 54 (M-5-U54) in all tRNAs. In Bacillus cereus (strain AH820), this protein is Methylenetetrahydrofolate--tRNA-(uracil-5-)-methyltransferase TrmFO.